Here is a 307-residue protein sequence, read N- to C-terminus: Transaldolase (307 aa).

K125 serves as the catalytic Schiff-base intermediate with substrate.

It belongs to the transaldolase family. Type 1 subfamily. As to quaternary structure, homodimer.

It localises to the cytoplasm. It carries out the reaction D-sedoheptulose 7-phosphate + D-glyceraldehyde 3-phosphate = D-erythrose 4-phosphate + beta-D-fructose 6-phosphate. It participates in carbohydrate degradation; pentose phosphate pathway; D-glyceraldehyde 3-phosphate and beta-D-fructose 6-phosphate from D-ribose 5-phosphate and D-xylulose 5-phosphate (non-oxidative stage): step 2/3. Its function is as follows. Transaldolase is important for the balance of metabolites in the pentose-phosphate pathway. The protein is Transaldolase of Pseudomonas paraeruginosa (strain DSM 24068 / PA7) (Pseudomonas aeruginosa (strain PA7)).